We begin with the raw amino-acid sequence, 111 residues long: Phosphoribosyl-ATP pyrophosphatase (111 aa).

Belongs to the PRA-PH family.

Its subcellular location is the cytoplasm. The catalysed reaction is 1-(5-phospho-beta-D-ribosyl)-ATP + H2O = 1-(5-phospho-beta-D-ribosyl)-5'-AMP + diphosphate + H(+). It participates in amino-acid biosynthesis; L-histidine biosynthesis; L-histidine from 5-phospho-alpha-D-ribose 1-diphosphate: step 2/9. This Pseudomonas putida (strain W619) protein is Phosphoribosyl-ATP pyrophosphatase.